Consider the following 64-residue polypeptide: Large ribosomal subunit protein bL35 (64 aa).

Positions Met-1–Tyr-28 are disordered.

It belongs to the bacterial ribosomal protein bL35 family.

The polypeptide is Large ribosomal subunit protein bL35 (Cytophaga hutchinsonii (strain ATCC 33406 / DSM 1761 / CIP 103989 / NBRC 15051 / NCIMB 9469 / D465)).